We begin with the raw amino-acid sequence, 489 residues long: Glutamate--tRNA ligase (489 aa).

The short motif at 11–21 (PSPTGHLHIGG) is the 'HIGH' region element. Zn(2+) contacts are provided by cysteine 108, cysteine 110, cysteine 136, and histidine 138. The 'KMSKS' region signature appears at 253–257 (KLSKR). Lysine 256 serves as a coordination point for ATP.

Belongs to the class-I aminoacyl-tRNA synthetase family. Glutamate--tRNA ligase type 1 subfamily. As to quaternary structure, monomer. Zn(2+) serves as cofactor.

The protein localises to the cytoplasm. The enzyme catalyses tRNA(Glu) + L-glutamate + ATP = L-glutamyl-tRNA(Glu) + AMP + diphosphate. Catalyzes the attachment of glutamate to tRNA(Glu) in a two-step reaction: glutamate is first activated by ATP to form Glu-AMP and then transferred to the acceptor end of tRNA(Glu). The sequence is that of Glutamate--tRNA ligase from Geobacillus thermodenitrificans (strain NG80-2).